The chain runs to 987 residues: Sarcosine oxidase subunit alpha (987 aa).

5 residues coordinate NAD(+): aspartate 198, glutamate 199, serine 206, alanine 244, and glycine 445. (6R)-5,10-methylene-5,6,7,8-tetrahydrofolate-binding residues include threonine 714 and glutamate 806.

It belongs to the GcvT family. In terms of assembly, heterotetramer composed of subunits alpha (SoxA), beta (SoxB), gamma (SoxG) and delta (SoxD). NAD(+) serves as cofactor.

The protein localises to the cytoplasm. The catalysed reaction is sarcosine + (6S)-5,6,7,8-tetrahydrofolate + O2 = (6R)-5,10-methylene-5,6,7,8-tetrahydrofolate + glycine + H2O2. It catalyses the reaction sarcosine + O2 + H2O = formaldehyde + glycine + H2O2. Functionally, in the presence of tetrahydrofolate, catalyzes the oxidative demethylation of sarcosine to yield glycine, 5,10-methylenetetrahydrofolate and hydrogen peroxide. In the absence of tetrahydrofolate, catalyzes the oxidative demethylation of sarcosine to yield glycine, formaldehyde and hydrogen peroxide. The protein is Sarcosine oxidase subunit alpha (soxA) of Rhizobium meliloti (strain 1021) (Ensifer meliloti).